The chain runs to 322 residues: Corticotropin-releasing factor-binding protein (322 aa).

Residues 1–24 form the signal peptide; that stretch reads MSPNFKLQCHFILILLTALRGESR. Intrachain disulfides connect cysteine 60/cysteine 81, cysteine 104/cysteine 141, cysteine 183/cysteine 205, cysteine 237/cysteine 264, and cysteine 277/cysteine 318. A glycan (N-linked (GlcNAc...) asparagine) is linked at asparagine 204.

It belongs to the CRF-binding protein family.

The protein resides in the secreted. Functionally, binds CRF and inactivates it. May prevent inappropriate pituitary-adrenal stimulation in pregnancy. The polypeptide is Corticotropin-releasing factor-binding protein (Crhbp) (Mus musculus (Mouse)).